The following is a 361-amino-acid chain: tRNA pseudouridine synthase D (361 aa).

Catalysis depends on Asp-76, which acts as the Nucleophile. Residues 151–318 (GIPNYFGYQR…EQGSRRLAWI (168 aa)) form the TRUD domain.

The protein belongs to the pseudouridine synthase TruD family.

The catalysed reaction is uridine(13) in tRNA = pseudouridine(13) in tRNA. Its function is as follows. Responsible for synthesis of pseudouridine from uracil-13 in transfer RNAs. In Wolinella succinogenes (strain ATCC 29543 / DSM 1740 / CCUG 13145 / JCM 31913 / LMG 7466 / NCTC 11488 / FDC 602W) (Vibrio succinogenes), this protein is tRNA pseudouridine synthase D.